The sequence spans 214 residues: Leucyl/phenylalanyl-tRNA--protein transferase (214 aa).

The protein belongs to the L/F-transferase family.

The protein resides in the cytoplasm. The catalysed reaction is N-terminal L-lysyl-[protein] + L-leucyl-tRNA(Leu) = N-terminal L-leucyl-L-lysyl-[protein] + tRNA(Leu) + H(+). The enzyme catalyses N-terminal L-arginyl-[protein] + L-leucyl-tRNA(Leu) = N-terminal L-leucyl-L-arginyl-[protein] + tRNA(Leu) + H(+). It carries out the reaction L-phenylalanyl-tRNA(Phe) + an N-terminal L-alpha-aminoacyl-[protein] = an N-terminal L-phenylalanyl-L-alpha-aminoacyl-[protein] + tRNA(Phe). In terms of biological role, functions in the N-end rule pathway of protein degradation where it conjugates Leu, Phe and, less efficiently, Met from aminoacyl-tRNAs to the N-termini of proteins containing an N-terminal arginine or lysine. In Cereibacter sphaeroides (strain ATCC 17023 / DSM 158 / JCM 6121 / CCUG 31486 / LMG 2827 / NBRC 12203 / NCIMB 8253 / ATH 2.4.1.) (Rhodobacter sphaeroides), this protein is Leucyl/phenylalanyl-tRNA--protein transferase.